The following is a 501-amino-acid chain: Cytochrome P450 2J1 (501 aa).

Residue Cys-447 coordinates heme.

It belongs to the cytochrome P450 family. The cofactor is heme. Small intestine.

Its subcellular location is the endoplasmic reticulum membrane. It localises to the microsome membrane. The enzyme catalyses an organic molecule + reduced [NADPH--hemoprotein reductase] + O2 = an alcohol + oxidized [NADPH--hemoprotein reductase] + H2O + H(+). Catalyzes the N-demethylation of benzphetamine to formaldehyde. The sequence is that of Cytochrome P450 2J1 (CYP2J1) from Oryctolagus cuniculus (Rabbit).